The following is a 640-amino-acid chain: Chaperone protein DnaK (640 aa).

Residue T196 is modified to Phosphothreonine; by autocatalysis. Disordered stretches follow at residues 487–526 (GKEQ…KEEI) and 593–640 (SHLY…GNDK). A compositionally biased stretch (basic and acidic residues) spans 501 to 526 (TDAEISKMKEDAKEHAAEDQKRKEEI). The span at 595–613 (LYQSQGPESSQPETAAQSD) shows a compositional bias: polar residues. Acidic residues predominate over residues 630-640 (AEYEVIDGNDK).

This sequence belongs to the heat shock protein 70 family.

Acts as a chaperone. The protein is Chaperone protein DnaK of Pelodictyon phaeoclathratiforme (strain DSM 5477 / BU-1).